A 1002-amino-acid polypeptide reads, in one-letter code: TOG array regulator of axonemal microtubules protein 2 (1002 aa).

Disordered stretches follow at residues serine 54–serine 74, lysine 131–glutamate 214, glutamate 332–valine 351, proline 402–asparagine 421, and leucine 426–arginine 450.

Belongs to the Crescerin family.

The sequence is that of TOG array regulator of axonemal microtubules protein 2 (Togaram2) from Mus musculus (Mouse).